Reading from the N-terminus, the 218-residue chain is PKHD-type hydroxylase IL0759 (218 aa).

Residues 76–170 (QVARVTINRY…RLAMIGWVQS (95 aa)) enclose the Fe2OG dioxygenase domain. His94, Asp96, and His151 together coordinate Fe cation. Arg161 serves as a coordination point for 2-oxoglutarate.

The cofactor is Fe(2+). It depends on L-ascorbate as a cofactor.

The sequence is that of PKHD-type hydroxylase IL0759 from Idiomarina loihiensis (strain ATCC BAA-735 / DSM 15497 / L2-TR).